The sequence spans 364 residues: Probable transcription factor At4g00390 (364 aa).

The tract at residues 1-149 is disordered; it reads MTKKLDPPTA…STKRVKKDEE (149 aa). Acidic residues predominate over residues 13-32; the sequence is SDEDDVETSEDDSSSSEEDE. Residues 39–80 show a composition bias toward low complexity; sequence ATTAAAPAKSTAVSAATPAKSTSVSAAAPSKSTAVSAAADSD. Positions 81-93 are enriched in acidic residues; the sequence is SGSESETDSDSES.

This sequence belongs to the GeBP family.

This chain is Probable transcription factor At4g00390, found in Arabidopsis thaliana (Mouse-ear cress).